The sequence spans 1307 residues: Cyclic nucleotide-gated channel beta-1 (1307 aa).

6 disordered regions span residues 1-101 (MLGW…AQVA), 126-178 (QPVY…TEPS), 193-262 (LPQP…PGDP), 320-458 (DSCW…LDSC), 470-625 (LERA…SQNS), and 648-681 (EKLI…KPAE). At 1-720 (MLGWVQRVLP…SIDPLTNLMY (720 aa)) the chain is on the cytoplasmic side. Residues 43–59 (VQPEPEPEPEPAPEEAA) show a composition bias toward acidic residues. Over residues 165–174 (GSDKTSKTQD) the composition is skewed to basic and acidic residues. The segment covering 361-386 (QEEEEEEKEEKEEKEEEEEKEEEEKR) has biased composition (acidic residues). Residues 387–406 (EEEKKKEKEEEKKEKEKEEK) are compositionally biased toward basic and acidic residues. 2 stretches are compositionally biased toward acidic residues: residues 407–451 (EEKE…EEEP) and 483–518 (LPEE…EEGE). Residues 550–560 (TIPPPERPPVS) are compositionally biased toward pro residues. A calmodulin-binding CaM1 region spans residues 621–631 (ASQNSAIINDR). The helical transmembrane segment at 721 to 742 (ILWLFFVVLAWNWNCWLIPVRW) threads the bilayer. At 743-751 (AFPYQRADN) the chain is on the extracellular side. A helical transmembrane segment spans residues 752-773 (IHLWLLMDYLCDFIYLLDITVF). Residues 774-788 (QMRLQFVKGGDIITD) lie on the Cytoplasmic side of the membrane. A helical transmembrane segment spans residues 789-808 (KKEMRNNYLKSQRFKMDLLC). The Extracellular portion of the chain corresponds to 809–824 (LLPLDFLYLKLGVNPL). A helical membrane pass occupies residues 825-837 (LRLPRCLKYMAFF). Residues 838–849 (EFNNRLEAILSK) are Cytoplasmic-facing. The helical transmembrane segment at 850 to 872 (AYVYRVIRTTAYLLYSLHLNSCL) threads the bilayer. The ion conduction pathway stretch occupies residues 850–949 (AYVYRVIRTT…IGQMRDVVGA (100 aa)). Residues 873–895 (YYWASAFQGIGSTHWVYDGVGNS) lie on the Extracellular side of the membrane. The next 2 membrane-spanning stretches (helical) occupy residues 896–922 (YIRC…LFEI) and 923–948 (VFQL…DVVG). Topologically, residues 949–1307 (AATAGQTYYR…MLEEKKEEVE (359 aa)) are cytoplasmic. Residues 952 to 1028 (AGQTYYRSCM…NIVSKVALFQ (77 aa)) form a C-linker region. A cNMP-binding domain region spans residues 1026–1130 (LFQGCDRQMI…LDKKDLNEIL (105 aa)). Positions 1032–1148 (RQMIFDMLKR…LLRKKARRML (117 aa)) are cyclic nucleotide-binding domain. The 3',5'-cyclic GMP site is built by G1093, E1094, S1096, R1106, and T1107. R1106 provides a ligand contact to 3',5'-cyclic AMP. A calmodulin-binding CaM2 region spans residues 1212–1218 (QQQLLEQ). Positions 1214 to 1238 (QLLEQAKSSQEAGGEEGSGATDQPA) are enriched in low complexity. Residues 1214–1307 (QLLEQAKSSQ…MLEEKKEEVE (94 aa)) are disordered. The segment covering 1250-1261 (EPPAPSSPPPAS) has biased composition (pro residues).

This sequence belongs to the cyclic nucleotide-gated cation channel (TC 1.A.1.5) family. CNGB1 subfamily. As to quaternary structure, the rod cyclic nucleotide-gated channel is a heterotetramer composed of CNGA1 and CNGB1 subunits with 3:1 stoichiometry. CNGA1:CNGB1 channel binds Ca(2+)-bound CALM1 via CaM1 and CaM2 regions of the CNGB1 subunit; this interaction modulates the affinity of the channel for cNMPs in response to intracellular Ca(2+) levels. The olfactory cyclic nucleotide-gated channel is a heterotetramer composed of CNGA2, CNGA4 and CNGB1b subunits with 2:1:1 stoichiometry. As to expression, expressed in olfactory sensory cilia (at protein level).

Its subcellular location is the cell projection. The protein resides in the cilium membrane. The enzyme catalyses Ca(2+)(in) = Ca(2+)(out). The catalysed reaction is Na(+)(in) = Na(+)(out). It catalyses the reaction K(+)(in) = K(+)(out). It carries out the reaction NH4(+)(in) = NH4(+)(out). The enzyme catalyses Rb(+)(in) = Rb(+)(out). The catalysed reaction is Li(+)(in) = Li(+)(out). It catalyses the reaction Cs(+)(in) = Cs(+)(out). Its function is as follows. Pore-forming subunit of the rod cyclic nucleotide-gated channel. Mediates rod photoresponses at dim light converting transient changes in intracellular cGMP levels into electrical signals. In the dark, cGMP levels are high and keep the channel open enabling a steady inward current carried by Na(+) and Ca(2+) ions that leads to membrane depolarization and neurotransmitter release from synaptic terminals. Upon photon absorption cGMP levels decline leading to channel closure and membrane hyperpolarization that ultimately slows neurotransmitter release and signals the presence of light, the end point of the phototransduction cascade. Conducts cGMP- and cAMP-gated ion currents, with permeability for monovalent and divalent cations. The selectivity for Ca(2+) over Na(+) increases with cGMP concentrations, whereas the selectivity among monovalent ions is independent of the cGMP levels. In terms of biological role, pore-forming subunit of the olfactory cyclic nucleotide-gated channel. Operates in the cilia of olfactory sensory neurons where chemical stimulation of the odorant is converted to an electrical signal. Mediates odorant-induced cAMP-dependent Ca(2+) influx triggering neuron depolarization. The rise of intracellular Ca(2+) levels potentiates the olfactory response by activating Ca(2+)-dependent Cl(-) channels, but it also serves as a negative feedback signal to desensitize the channel for rapid adaptation to odorants. This Rattus norvegicus (Rat) protein is Cyclic nucleotide-gated channel beta-1.